The chain runs to 209 residues: Ribosomal RNA large subunit methyltransferase E (209 aa).

S-adenosyl-L-methionine is bound by residues glycine 63, tryptophan 65, aspartate 83, aspartate 99, and aspartate 124. The active-site Proton acceptor is lysine 164.

The protein belongs to the class I-like SAM-binding methyltransferase superfamily. RNA methyltransferase RlmE family.

It is found in the cytoplasm. It carries out the reaction uridine(2552) in 23S rRNA + S-adenosyl-L-methionine = 2'-O-methyluridine(2552) in 23S rRNA + S-adenosyl-L-homocysteine + H(+). Specifically methylates the uridine in position 2552 of 23S rRNA at the 2'-O position of the ribose in the fully assembled 50S ribosomal subunit. In Colwellia psychrerythraea (strain 34H / ATCC BAA-681) (Vibrio psychroerythus), this protein is Ribosomal RNA large subunit methyltransferase E.